Consider the following 124-residue polypeptide: Putative iron-sulfur cluster insertion protein ErpA (124 aa).

Positions 52, 116, and 118 each coordinate iron-sulfur cluster.

Belongs to the HesB/IscA family. Homodimer. Iron-sulfur cluster serves as cofactor.

Functionally, required for insertion of 4Fe-4S clusters. In Ralstonia pickettii (strain 12J), this protein is Putative iron-sulfur cluster insertion protein ErpA.